Here is a 396-residue protein sequence, read N- to C-terminus: Tryptophan synthase beta chain (396 aa).

Lysine 88 carries the N6-(pyridoxal phosphate)lysine modification.

Belongs to the TrpB family. In terms of assembly, tetramer of two alpha and two beta chains. The cofactor is pyridoxal 5'-phosphate.

It carries out the reaction (1S,2R)-1-C-(indol-3-yl)glycerol 3-phosphate + L-serine = D-glyceraldehyde 3-phosphate + L-tryptophan + H2O. It participates in amino-acid biosynthesis; L-tryptophan biosynthesis; L-tryptophan from chorismate: step 5/5. The beta subunit is responsible for the synthesis of L-tryptophan from indole and L-serine. The polypeptide is Tryptophan synthase beta chain (Shewanella oneidensis (strain ATCC 700550 / JCM 31522 / CIP 106686 / LMG 19005 / NCIMB 14063 / MR-1)).